Reading from the N-terminus, the 481-residue chain is MQAKLTKNEFIEWLKTSEGKQFNVDLWYGFQCFDYANAGWKVLFGLLLKGLGAKDIPFANNFDGLATVYQNTPDFLAQPGDMVVFGSNYGAGYGHVAWVIEATLDYIIVYEQNWLGGGWTDGIEQPGWGWEKVTRRQHAYDFPMWFIRPNFKSETAPRSVQSPTQAPKKETAKPQPKAVELKIIKDVVKGYDLPKRGSNPKGIVIHNDAGSKGATAEAYRNGLVNAPLSRLEAGIAHSYVSGNTVWQALDESQVGWHTANQIGNKYYYGIEVCQSMGADNATFLKNEQATFQECARLLKKWGLPANRNTIRLHNEFTSTSCPHRSSVLHTGFDPVTRGLLPEDKRLQLKDYFIKQIRAYMDGKIPVATVSNESSASSNTVKPVASAWKRNKYGTYYMEESARFTNGNQPITVRKVGPFLSCPVGYQFQPGGYCDYTEVMLQDGHVWVGYTWEGQRYYLPIRTWNGSAPPNQILGDLWGEIS.

Residues 7–148 enclose the Peptidase C51 domain; that stretch reads KNEFIEWLKT…AYDFPMWFIR (142 aa). The span at 155–165 shows a compositional bias: polar residues; that stretch reads TAPRSVQSPTQ. Positions 155–177 are disordered; it reads TAPRSVQSPTQAPKKETAKPQPK. The region spanning 198 to 323 is the N-acetylmuramoyl-L-alanine amidase domain; that stretch reads SNPKGIVIHN…NEFTSTSCPH (126 aa). The SH3b domain occupies 398-466; the sequence is EESARFTNGN…YLPIRTWNGS (69 aa).

It belongs to the N-acetylmuramoyl-L-alanine amidase 2 family.

The enzyme catalyses Hydrolyzes the link between N-acetylmuramoyl residues and L-amino acid residues in certain cell-wall glycopeptides.. In terms of biological role, has weak lytic activity toward S.aureus cells. The chain is Probable autolysin LytO from Staphylococcus aureus (strain NCTC 8325 / PS 47).